Here is a 1403-residue protein sequence, read N- to C-terminus: DNA-directed RNA polymerase subunit beta' (1403 aa).

Residues cysteine 71, cysteine 73, cysteine 86, and cysteine 89 each coordinate Zn(2+). Aspartate 462, aspartate 464, and aspartate 466 together coordinate Mg(2+). Zn(2+)-binding residues include cysteine 820, cysteine 893, cysteine 900, and cysteine 903.

This sequence belongs to the RNA polymerase beta' chain family. The RNAP catalytic core consists of 2 alpha, 1 beta, 1 beta' and 1 omega subunit. When a sigma factor is associated with the core the holoenzyme is formed, which can initiate transcription. The cofactor is Mg(2+). Requires Zn(2+) as cofactor.

The enzyme catalyses RNA(n) + a ribonucleoside 5'-triphosphate = RNA(n+1) + diphosphate. Functionally, DNA-dependent RNA polymerase catalyzes the transcription of DNA into RNA using the four ribonucleoside triphosphates as substrates. The chain is DNA-directed RNA polymerase subunit beta' from Methylobacterium radiotolerans (strain ATCC 27329 / DSM 1819 / JCM 2831 / NBRC 15690 / NCIMB 10815 / 0-1).